Reading from the N-terminus, the 86-residue chain is Small ribosomal subunit protein bS16 (86 aa).

The protein belongs to the bacterial ribosomal protein bS16 family.

This is Small ribosomal subunit protein bS16 from Methylibium petroleiphilum (strain ATCC BAA-1232 / LMG 22953 / PM1).